A 425-amino-acid chain; its full sequence is Lipoyl synthase, mitochondrial (425 aa).

The transit peptide at 1–33 (MAASSTRLRCLYASSSTWKTSPSQSLISLSRRY) directs the protein to the mitochondrion. The interval 17–55 (TWKTSPSQSLISLSRRYATTSSAPPTPSDESSSTLPKRR) is disordered. Residues 33-51 (YATTSSAPPTPSDESSSTL) are compositionally biased toward polar residues. Residues Cys-142, Cys-147, Cys-153, Cys-173, Cys-177, Cys-180, and Ser-388 each coordinate [4Fe-4S] cluster. A Radical SAM core domain is found at 156–377 (GSDKSAATAT…RQRALEMGFL (222 aa)).

Belongs to the radical SAM superfamily. Lipoyl synthase family. It depends on [4Fe-4S] cluster as a cofactor.

It localises to the mitochondrion. The catalysed reaction is [[Fe-S] cluster scaffold protein carrying a second [4Fe-4S](2+) cluster] + N(6)-octanoyl-L-lysyl-[protein] + 2 oxidized [2Fe-2S]-[ferredoxin] + 2 S-adenosyl-L-methionine + 4 H(+) = [[Fe-S] cluster scaffold protein] + N(6)-[(R)-dihydrolipoyl]-L-lysyl-[protein] + 4 Fe(3+) + 2 hydrogen sulfide + 2 5'-deoxyadenosine + 2 L-methionine + 2 reduced [2Fe-2S]-[ferredoxin]. Its pathway is protein modification; protein lipoylation via endogenous pathway; protein N(6)-(lipoyl)lysine from octanoyl-[acyl-carrier-protein]: step 2/2. Functionally, catalyzes the radical-mediated insertion of two sulfur atoms into the C-6 and C-8 positions of the octanoyl moiety bound to the lipoyl domains of lipoate-dependent enzymes, thereby converting the octanoylated domains into lipoylated derivatives. This chain is Lipoyl synthase, mitochondrial, found in Talaromyces marneffei (strain ATCC 18224 / CBS 334.59 / QM 7333) (Penicillium marneffei).